Here is a 256-residue protein sequence, read N- to C-terminus: tRNA-cytidine(32) 2-sulfurtransferase (256 aa).

The PP-loop motif motif lies at 35-40; it reads SGGKDS. Residues Cys-110, Cys-113, and Cys-201 each coordinate [4Fe-4S] cluster.

It belongs to the TtcA family. As to quaternary structure, homodimer. Mg(2+) serves as cofactor. It depends on [4Fe-4S] cluster as a cofactor.

It is found in the cytoplasm. It catalyses the reaction cytidine(32) in tRNA + S-sulfanyl-L-cysteinyl-[cysteine desulfurase] + AH2 + ATP = 2-thiocytidine(32) in tRNA + L-cysteinyl-[cysteine desulfurase] + A + AMP + diphosphate + H(+). The protein operates within tRNA modification. Its function is as follows. Catalyzes the ATP-dependent 2-thiolation of cytidine in position 32 of tRNA, to form 2-thiocytidine (s(2)C32). The sulfur atoms are provided by the cysteine/cysteine desulfurase (IscS) system. The polypeptide is tRNA-cytidine(32) 2-sulfurtransferase (Coxiella burnetii (strain Dugway 5J108-111)).